The following is a 433-amino-acid chain: Xylose isomerase (433 aa).

Catalysis depends on residues histidine 99 and aspartate 102. 7 residues coordinate Mg(2+): glutamate 230, glutamate 266, histidine 269, aspartate 294, aspartate 305, aspartate 307, and aspartate 337.

The protein belongs to the xylose isomerase family. In terms of assembly, homotetramer. Mg(2+) serves as cofactor.

It localises to the cytoplasm. It carries out the reaction alpha-D-xylose = alpha-D-xylulofuranose. The protein is Xylose isomerase of Cereibacter sphaeroides (strain ATCC 17029 / ATH 2.4.9) (Rhodobacter sphaeroides).